Here is a 240-residue protein sequence, read N- to C-terminus: Nicotinamide riboside kinase (240 aa).

13-21 serves as a coordination point for ATP; that stretch reads GCSSSGKTT. Residues Thr-20 and Asp-39 each coordinate Mg(2+). The active-site Proton acceptor is the Asp-39. Substrate contacts are provided by residues 39 to 42 and 59 to 60; these read DDFY and WD. Position 158 (Arg-158) interacts with ATP. Substrate is bound by residues Arg-159 and 164 to 165; that span reads GY. Residues 162-164 and 208-210 each bind ATP; these read RKG and KSK.

Belongs to the uridine kinase family. NRK subfamily.

The enzyme catalyses beta-nicotinamide D-riboside + ATP = beta-nicotinamide D-ribonucleotide + ADP + H(+). It catalyses the reaction beta-D-ribosylnicotinate + ATP = nicotinate beta-D-ribonucleotide + ADP + H(+). Its pathway is cofactor biosynthesis; NAD(+) biosynthesis. Functionally, catalyzes the phosphorylation of nicotinamide riboside (NR) and nicotinic acid riboside (NaR) to form nicotinamide mononucleotide (NMN) and nicotinic acid mononucleotide (NaMN). The chain is Nicotinamide riboside kinase (NRK1) from Saccharomyces cerevisiae (strain ATCC 204508 / S288c) (Baker's yeast).